Here is a 486-residue protein sequence, read N- to C-terminus: 2-isopropylmalate synthase (486 aa).

Positions 4-266 (VYIFDTTLRD…KTDVNLKEIA (263 aa)) constitute a Pyruvate carboxyltransferase domain. Asp13, His201, His203, and Asn237 together coordinate Mn(2+). Residues 390-486 (KVEIIHVTSG…LSTDIIEASA (97 aa)) form a regulatory domain region.

Belongs to the alpha-IPM synthase/homocitrate synthase family. LeuA type 1 subfamily. It depends on Mn(2+) as a cofactor.

It is found in the cytoplasm. The catalysed reaction is 3-methyl-2-oxobutanoate + acetyl-CoA + H2O = (2S)-2-isopropylmalate + CoA + H(+). The protein operates within amino-acid biosynthesis; L-leucine biosynthesis; L-leucine from 3-methyl-2-oxobutanoate: step 1/4. Functionally, catalyzes the condensation of the acetyl group of acetyl-CoA with 3-methyl-2-oxobutanoate (2-ketoisovalerate) to form 3-carboxy-3-hydroxy-4-methylpentanoate (2-isopropylmalate). The sequence is that of 2-isopropylmalate synthase from Pyrococcus abyssi (strain GE5 / Orsay).